A 491-amino-acid polypeptide reads, in one-letter code: Spermatogenesis-defective protein 39 homolog (491 aa).

Thr-21 carries the post-translational modification Phosphothreonine. The segment covering 72-81 (KETAGSSGST) has biased composition (polar residues). The disordered stretch occupies residues 72-101 (KETAGSSGSTPEGREQLKGRNSFYTQLPKP). Residue Thr-115 is modified to Phosphothreonine. Ser-119, Ser-122, and Ser-128 each carry phosphoserine. The disordered stretch occupies residues 121–141 (QSLSDALSDTPAKSYAPELGR). Position 130 is a phosphothreonine (Thr-130).

This sequence belongs to the SPE39 family. Interacts with VPS33B. Associates with the homotypic fusion and vacuole protein sorting (HOPS) complex; impaired by VPS33B. Interacts with RAB11A.

The protein resides in the cytoplasm. The protein localises to the cytoplasmic vesicle. Its subcellular location is the early endosome. It is found in the recycling endosome. It localises to the late endosome. Its function is as follows. Proposed to be involved in endosomal maturation implicating in part VPS33B. In epithelial cells, the VPS33B:VIPAS39 complex may play a role in the apical RAB11A-dependent recycling pathway and in the maintenance of the apical-basolateral polarity. May play a role in lysosomal trafficking, probably via association with the core HOPS complex in a discrete population of endosomes; the functions seems to be independent of VPS33B. May play a role in vesicular trafficking during spermatogenesis. May be involved in direct or indirect transcriptional regulation of E-cadherin. This Mus musculus (Mouse) protein is Spermatogenesis-defective protein 39 homolog (Vipas39).